A 331-amino-acid polypeptide reads, in one-letter code: Ketol-acid reductoisomerase (NADP(+)) (331 aa).

A KARI N-terminal Rossmann domain is found at 2-182 (IKKYYDADCN…GAGRAGILET (181 aa)). Residues 25-28 (YGSQ), R48, and S51 contribute to the NADP(+) site. Residue H108 is part of the active site. G134 serves as a coordination point for NADP(+). The KARI C-terminal knotted domain occupies 183 to 329 (TFREETETDL…AELRKMMSWI (147 aa)). Mg(2+) contacts are provided by D191, E195, E227, and E231. S252 contacts substrate.

Belongs to the ketol-acid reductoisomerase family. The cofactor is Mg(2+).

It carries out the reaction (2R)-2,3-dihydroxy-3-methylbutanoate + NADP(+) = (2S)-2-acetolactate + NADPH + H(+). It catalyses the reaction (2R,3R)-2,3-dihydroxy-3-methylpentanoate + NADP(+) = (S)-2-ethyl-2-hydroxy-3-oxobutanoate + NADPH + H(+). The protein operates within amino-acid biosynthesis; L-isoleucine biosynthesis; L-isoleucine from 2-oxobutanoate: step 2/4. Its pathway is amino-acid biosynthesis; L-valine biosynthesis; L-valine from pyruvate: step 2/4. Involved in the biosynthesis of branched-chain amino acids (BCAA). Catalyzes an alkyl-migration followed by a ketol-acid reduction of (S)-2-acetolactate (S2AL) to yield (R)-2,3-dihydroxy-isovalerate. In the isomerase reaction, S2AL is rearranged via a Mg-dependent methyl migration to produce 3-hydroxy-3-methyl-2-ketobutyrate (HMKB). In the reductase reaction, this 2-ketoacid undergoes a metal-dependent reduction by NADPH to yield (R)-2,3-dihydroxy-isovalerate. The chain is Ketol-acid reductoisomerase (NADP(+)) from Brachyspira hyodysenteriae (strain ATCC 49526 / WA1).